The primary structure comprises 1349 residues: MEARSRSAEELRRAELVEIIVETEAQTGVSGINVAGGGKEGIFVRDLREDSPAARSLSLQEGDQLLSARVFFENFKYEDALRLLQCAEPYKVSFCLKRTVPTGDLALRPGTVAGYEIKGPRAKVAKLNIQSLSPVKKKKMVMPGALGAPADLAPVDVEFSFPKFSRLRRGLKAEAVEGPVPAAPTRRRLQLPRLRVREVAEEAQVARLAAAAPPPRKAKAEAEVAAGPRFTAPQVELVGPRLPGAEVGVPQVPAPKREAAPAVEPAAVGIQVPQVELPSLPSLPALPTLPCLETREGAVAVTVPTLDVAAPTVGVDLALPGAEVEPREEVPEVALKMPRLSFPRFGARAKEAAEAKVKGPKLRMPTFGLSLLEPRPAVPEAPESKLKLPTIKIPSFGIGVSPPEVKVPKGPEVKPPKVPEVKLPKMPEPVLPEVRLPEVELPKVSEMKLPKVPEMAVPEVRLPEVQLPKVPEMKLPEVKLPKVPEMAVPEVHLPEVQLPKVPEMKLPEVKLPKVPEMAVPEVRLPEVQLPKVPEMKLPKVPEMKCPEMKLPKVPEMAVPEVRLPEVQLPKVPEVKLPEVKLPEVKLPKVPEMAVPEVHLPEVQLPKVSEMKVPDVKLPEVKLPEIKLPKVPEMVVPDVHLPQVHLPKVSEMRLPEVQAPKVPEVHLPKAPEVKLPKAPEAQLKAARVEEAEGMDFGFKMPKMTLPKLGRAESPSQGKPGEAGAEVSGKLVTLPCLQPEVGSEARVGVPRLTLPSVELDLPGALGLEGQAAAAEVGKGEQAEAAGVGEVAFRLPSVEIVTPQLPTLDEGQAEVTEAKVKLSSKFSLPKFGLSGPKVTKPEAEGAGRAAKLKVSKFAISLPRARVGTEVEAKGTEEAGLLPALDLSIPQLSLDSHLPTGKAEVAGADIKLKGPKFGLPKFGVRGRDTEAGELVPGAAELEGKSRGWDGKVKMPKLKMPSFGLARGKEADISGGQVSPGEKPESTAVQLKIPEVELVTLGAQEEGRVEEEAAGSRGRLAGLQVSPAKQVGTEAQDGGLRMPLGISLPQVELTGFREATPGQQAESSAPPAEGTAGYRVHVPQVTLALPGAQAVGGELLVGEGVFKMPSVTVPQLELDVGLSREVQDGEAATSEGGLKLKVPTLGARAGAGAEGPSDQSAGAERTFHLSLPDVELSPPAVGTHAEYQVAEGEGDAGHKLKVRLPRFGLARAKEGAEEGEKAKSPKLKLPHVGFSQSEAVSGEGSPSPEEEDVEGGGEGASGRRGRVRVRLPRVGLAAPSKASRGQEGKAAPKSPSGEKSPKFRFPRVSLSPKTRGGSGDQDEGGFRVRLPSVGFSETGPPGPTRMEGAQAAVI.

At S7 the chain carries Phosphoserine. In terms of domain architecture, PDZ spans 16–99 (LVEIIVETEA…YKVSFCLKRT (84 aa)). A Nuclear export signal motif is present at residues 70-84 (VFFENFKYEDALRLL). Phosphoserine is present on S133. 41 repeat units span residues 402 to 406 (PPEVK), 410 to 414 (GPEVK), 418 to 422 (VPEVK), 426 to 430 (MPEPV), 431 to 435 (LPEVR), 436 to 440 (LPEVE), 444 to 448 (VSEMK), 452 to 456 (VPEMA), 457 to 461 (VPEVR), 462 to 466 (LPEVQ), 467 to 471 (LPKVP), 472 to 476 (EMKLP), 477 to 481 (EVKLP), 485 to 489 (EMAVP), 493 to 497 (LPEVQ), 501 to 505 (VPEMK), 506 to 510 (LPEVK), 514 to 518 (VPEMA), 519 to 523 (VPEVR), 524 to 528 (LPEVQ), 532 to 536 (VPEMK), 537 to 549 (LPKVPEMKCPEMK), 553 to 557 (VPEMA), 558 to 562 (VPEVR), 563 to 567 (LPEVQ), 571 to 575 (VPEVK), 576 to 580 (LPEVK), 589 to 593 (VPEMA), 594 to 598 (VPEVH), 599 to 603 (LPEVQ), 612 to 616 (VPDVK), 617 to 621 (LPEVK), 622 to 626 (LPEIK), 630 to 634 (VPEMV), 635 to 639 (VPDVH), 643 to 647 (VHLPK), 648 to 652 (VSEMR), 653 to 657 (LPEVQ), 661 to 665 (VPEVH), 669 to 673 (APEVK), and 674 to 678 (LPKAP). A 41 X 5 AA approximate tandem repeats of [LVMGIE]-[PSM]-[EDKA]-[LIVMA]-[AQKHPRT]; that may have a tripeptide spacer of [ALKD]-[IPV]-[KPH] region spans residues 402–678 (PPEVKVPKGP…APEVKLPKAP (277 aa)). 2 positions are modified to phosphoserine: S794 and S974. Positions 1207 to 1218 (AKEGAEEGEKAK) are enriched in basic and acidic residues. The interval 1207–1349 (AKEGAEEGEK…RMEGAQAAVI (143 aa)) is disordered. Positions 1232 to 1242 (SEAVSGEGSPS) are enriched in low complexity. Phosphoserine occurs at positions 1236, 1240, 1242, 1289, 1295, and 1327.

This sequence belongs to the periaxin family. In terms of assembly, homodimer (via PDZ domain). Interacts with SCN10A. Found in a complex with SCN10A. Interacts with DRP2. Identified in a dystroglycan complex that contains at least PRX, DRP2, UTRN, DMD and DAG1. Detected in a complex composed of at least EZR, AHNAK, PPL and PRX. Identified in a complex with EZR, AHNAK, BFSP1, BFSP2, ANK2, PLEC, VIM and spectrin. As to expression, detected in eye lens (at protein level).

Its subcellular location is the nucleus. The protein localises to the cytoplasm. It localises to the cell membrane. It is found in the cell junction. The protein resides in the adherens junction. In terms of biological role, scaffolding protein that functions as part of a dystroglycan complex in Schwann cells, and as part of EZR and AHNAK-containing complexes in eye lens fiber cells. Required for the maintenance of the peripheral myelin sheath that is essential for normal transmission of nerve impulses and normal perception of sensory stimuli. Required for normal transport of MBP mRNA from the perinuclear to the paranodal regions. Required for normal remyelination after nerve injury. Required for normal elongation of Schwann cells and normal length of the internodes between the nodes of Ranvier. The demyelinated nodes of Ranvier permit saltatory transmission of nerve impulses; shorter internodes cause slower transmission of nerve impulses. Required for the formation of appositions between the abaxonal surface of the myelin sheath and the Schwann cell plasma membrane; the Schwann cell cytoplasm is restricted to regions between these appositions. Required for the formation of Cajal bands and of Schmidt-Lanterman incisures that correspond to short, cytoplasm-filled regions on myelinated nerves. Recruits DRP2 to the Schwann cell plasma membrane. Required for normal protein composition of the eye lens fiber cell plasma membrane and normal eye lens fiber cell morphology. In Bos taurus (Bovine), this protein is Periaxin (PRX).